The sequence spans 169 residues: Large ribosomal subunit protein bL17 (169 aa).

The disordered stretch occupies residues 124–169 (EKAVKRQDRSRRVKGSKKAIDEKTSDDSASVEAAPAAPEAEEKKDA). A compositionally biased stretch (basic residues) spans 131–140 (DRSRRVKGSK). Over residues 150-161 (DSASVEAAPAAP) the composition is skewed to low complexity.

The protein belongs to the bacterial ribosomal protein bL17 family. Part of the 50S ribosomal subunit. Contacts protein L32.

In Chloroherpeton thalassium (strain ATCC 35110 / GB-78), this protein is Large ribosomal subunit protein bL17.